A 549-amino-acid chain; its full sequence is Cytoplasmic trehalase (549 aa).

Substrate is bound by residues Arg168, 175 to 176 (WD), Asn212, 221 to 223 (RSQ), 292 to 294 (RDE), and Gly324. Active-site proton donor/acceptor residues include Asp326 and Glu509. Residue Glu525 coordinates substrate.

The protein belongs to the glycosyl hydrolase 37 family. In terms of assembly, monomer.

It is found in the cytoplasm. The catalysed reaction is alpha,alpha-trehalose + H2O = alpha-D-glucose + beta-D-glucose. It participates in glycan degradation; trehalose degradation; D-glucose from alpha,alpha-trehalose: step 1/1. In terms of biological role, hydrolyzes trehalose to glucose. Could be involved, in cells returning to low osmolarity conditions, in the utilization of the accumulated cytoplasmic trehalose, which was synthesized in response to high osmolarity. The polypeptide is Cytoplasmic trehalase (Salmonella choleraesuis (strain SC-B67)).